Here is a 458-residue protein sequence, read N- to C-terminus: Bifunctional protein GlmU (458 aa).

A pyrophosphorylase region spans residues 1-230 (MLQVDVVILA…DWEVSGVNDK (230 aa)). UDP-N-acetyl-alpha-D-glucosamine contacts are provided by residues 9-12 (LAAG), K23, Q75, and 80-81 (GT). Position 104 (D104) interacts with Mg(2+). Positions 139, 155, 170, and 228 each coordinate UDP-N-acetyl-alpha-D-glucosamine. N228 lines the Mg(2+) pocket. The linker stretch occupies residues 231-251 (IQLSILERAHQQDTANRLMEQ). The interval 252-458 (GVMFADPARF…NWKRPRKDRN (207 aa)) is N-acetyltransferase. R334 and K352 together coordinate UDP-N-acetyl-alpha-D-glucosamine. The active-site Proton acceptor is H364. Residues Y367 and N378 each contribute to the UDP-N-acetyl-alpha-D-glucosamine site. Acetyl-CoA-binding positions include A381, 387-388 (NY), S406, A424, and R441.

The protein in the N-terminal section; belongs to the N-acetylglucosamine-1-phosphate uridyltransferase family. In the C-terminal section; belongs to the transferase hexapeptide repeat family. In terms of assembly, homotrimer. Mg(2+) is required as a cofactor.

Its subcellular location is the cytoplasm. The catalysed reaction is alpha-D-glucosamine 1-phosphate + acetyl-CoA = N-acetyl-alpha-D-glucosamine 1-phosphate + CoA + H(+). It catalyses the reaction N-acetyl-alpha-D-glucosamine 1-phosphate + UTP + H(+) = UDP-N-acetyl-alpha-D-glucosamine + diphosphate. It functions in the pathway nucleotide-sugar biosynthesis; UDP-N-acetyl-alpha-D-glucosamine biosynthesis; N-acetyl-alpha-D-glucosamine 1-phosphate from alpha-D-glucosamine 6-phosphate (route II): step 2/2. Its pathway is nucleotide-sugar biosynthesis; UDP-N-acetyl-alpha-D-glucosamine biosynthesis; UDP-N-acetyl-alpha-D-glucosamine from N-acetyl-alpha-D-glucosamine 1-phosphate: step 1/1. The protein operates within bacterial outer membrane biogenesis; LPS lipid A biosynthesis. Its function is as follows. Catalyzes the last two sequential reactions in the de novo biosynthetic pathway for UDP-N-acetylglucosamine (UDP-GlcNAc). The C-terminal domain catalyzes the transfer of acetyl group from acetyl coenzyme A to glucosamine-1-phosphate (GlcN-1-P) to produce N-acetylglucosamine-1-phosphate (GlcNAc-1-P), which is converted into UDP-GlcNAc by the transfer of uridine 5-monophosphate (from uridine 5-triphosphate), a reaction catalyzed by the N-terminal domain. The protein is Bifunctional protein GlmU of Nitrosomonas europaea (strain ATCC 19718 / CIP 103999 / KCTC 2705 / NBRC 14298).